Consider the following 317-residue polypeptide: Methionyl-tRNA formyltransferase (317 aa).

112 to 115 (SILP) provides a ligand contact to (6S)-5,6,7,8-tetrahydrofolate.

Belongs to the Fmt family.

The enzyme catalyses L-methionyl-tRNA(fMet) + (6R)-10-formyltetrahydrofolate = N-formyl-L-methionyl-tRNA(fMet) + (6S)-5,6,7,8-tetrahydrofolate + H(+). In terms of biological role, attaches a formyl group to the free amino group of methionyl-tRNA(fMet). The formyl group appears to play a dual role in the initiator identity of N-formylmethionyl-tRNA by promoting its recognition by IF2 and preventing the misappropriation of this tRNA by the elongation apparatus. This chain is Methionyl-tRNA formyltransferase, found in Mannheimia succiniciproducens (strain KCTC 0769BP / MBEL55E).